The primary structure comprises 247 residues: Small ribosomal subunit protein uS2 (247 aa).

The protein belongs to the universal ribosomal protein uS2 family.

The chain is Small ribosomal subunit protein uS2 from Cupriavidus pinatubonensis (strain JMP 134 / LMG 1197) (Cupriavidus necator (strain JMP 134)).